The following is an 85-amino-acid chain: Acyl carrier protein (85 aa).

The region spanning 2 to 78 (SQISERVIDL…DAIAYIESHA (77 aa)) is the Carrier domain. S37 carries the O-(pantetheine 4'-phosphoryl)serine modification.

The protein belongs to the acyl carrier protein (ACP) family. 4'-phosphopantetheine is transferred from CoA to a specific serine of apo-ACP by AcpS. This modification is essential for activity because fatty acids are bound in thioester linkage to the sulfhydryl of the prosthetic group.

It is found in the cytoplasm. It functions in the pathway lipid metabolism; fatty acid biosynthesis. Its function is as follows. Carrier of the growing fatty acid chain in fatty acid biosynthesis. The polypeptide is Acyl carrier protein (Azobacteroides pseudotrichonymphae genomovar. CFP2).